The following is a 604-amino-acid chain: Elongation factor 4 (604 aa).

A tr-type G domain is found at 10-191 (KNIRNFSIIA…KIITTIPAPS (182 aa)). Residues 22–27 (DHGKST) and 138–141 (NKID) each bind GTP.

The protein belongs to the TRAFAC class translation factor GTPase superfamily. Classic translation factor GTPase family. LepA subfamily.

The protein localises to the cell inner membrane. It catalyses the reaction GTP + H2O = GDP + phosphate + H(+). In terms of biological role, required for accurate and efficient protein synthesis under certain stress conditions. May act as a fidelity factor of the translation reaction, by catalyzing a one-codon backward translocation of tRNAs on improperly translocated ribosomes. Back-translocation proceeds from a post-translocation (POST) complex to a pre-translocation (PRE) complex, thus giving elongation factor G a second chance to translocate the tRNAs correctly. Binds to ribosomes in a GTP-dependent manner. The sequence is that of Elongation factor 4 from Helicobacter pylori (strain J99 / ATCC 700824) (Campylobacter pylori J99).